Reading from the N-terminus, the 320-residue chain is Replication-associated protein ORF2 (320 aa).

Active-site O-(5'-phospho-DNA)-tyrosine intermediate residues include tyrosine 188 and tyrosine 192.

It belongs to the microviridae Rep protein family.

It catalyses the reaction ATP + (deoxyribonucleotide)n-3'-hydroxyl + 5'-phospho-(deoxyribonucleotide)m = (deoxyribonucleotide)n+m + AMP + diphosphate.. Plays an essential role in viral DNA replication. Binds the origin of replication and cleaves the dsDNA replicative form I (RFI) and becomes covalently bound to it via phosphotyrosine bond, generating the dsDNA replicative form II (RFII). In turn, viral DNA replication initiates at the 3'-OH of the cleavage site. After one round of rolling circle synthesis, protein ORF2 is linked to the newly synthesized ssDNA and joins the ends of the displaced strand to generate a circular single-stranded molecule ready to be packed into a virion. The protein is Replication-associated protein ORF2 of Spiroplasma virus 4 (SpV4).